A 296-amino-acid chain; its full sequence is MNHVGRKCSMSAIVGATNAGKSTLVNVLVGQKVAAVTPKVQTTRVRMHAVSNHENVQLIFIDTPGIFSPKTKLEKFLVKHAWMSLKGIENVIVLVDVKNYLNQHLKKIIDRIKHSNLNAILVLNKIDIVHQSIVSEVIEYMYSLYKFSKAFTISALYGIGIDKLVDYLCETSPYGPWLYNDDQISDAPLKFFMAEITREKLFITLRHELPYSLSVVTELVEEKEDNSLIIKQVIYVTKGSHKTIILGKKGEMVKKISMESKSDLENILQVKVHLFLFVKVREFWQNHLNECVGYAE.

Residues 7–174 (KCSMSAIVGA…VDYLCETSPY (168 aa)) enclose the Era-type G domain. The segment at 15-22 (GATNAGKS) is G1. 15–22 (GATNAGKS) lines the GTP pocket. The G2 stretch occupies residues 41 to 45 (QTTRV). The segment at 62–65 (DTPG) is G3. GTP contacts are provided by residues 62–66 (DTPGI) and 124–127 (NKID). The tract at residues 124–127 (NKID) is G4. Positions 153 to 155 (ISA) are G5. The region spanning 205–282 (LRHELPYSLS…HLFLFVKVRE (78 aa)) is the KH type-2 domain.

It belongs to the TRAFAC class TrmE-Era-EngA-EngB-Septin-like GTPase superfamily. Era GTPase family. In terms of assembly, monomer.

The protein resides in the cytoplasm. It is found in the cell inner membrane. An essential GTPase that binds both GDP and GTP, with rapid nucleotide exchange. Plays a role in 16S rRNA processing and 30S ribosomal subunit biogenesis and possibly also in cell cycle regulation and energy metabolism. This Ehrlichia ruminantium (strain Welgevonden) protein is GTPase Era.